Consider the following 522-residue polypeptide: Maturase K (522 aa).

Belongs to the intron maturase 2 family. MatK subfamily.

The protein localises to the plastid. Its subcellular location is the chloroplast. In terms of biological role, usually encoded in the trnK tRNA gene intron. Probably assists in splicing its own and other chloroplast group II introns. This Dianella ensifolia (Flax lily) protein is Maturase K.